The following is a 229-amino-acid chain: Potassium/proton antiporter CemA (229 aa).

3 helical membrane-spanning segments follow: residues 7-27, 107-127, and 189-209; these read FTPL…SFSV, ILHF…SILG, and IISG…KYWI.

This sequence belongs to the CemA family.

It is found in the plastid. It localises to the chloroplast inner membrane. The enzyme catalyses K(+)(in) + H(+)(out) = K(+)(out) + H(+)(in). Its function is as follows. Contributes to K(+)/H(+) antiport activity by supporting proton efflux to control proton extrusion and homeostasis in chloroplasts in a light-dependent manner to modulate photosynthesis. Prevents excessive induction of non-photochemical quenching (NPQ) under continuous-light conditions. Indirectly promotes efficient inorganic carbon uptake into chloroplasts. This chain is Potassium/proton antiporter CemA, found in Nicotiana sylvestris (Wood tobacco).